Reading from the N-terminus, the 242-residue chain is Uridylate kinase (242 aa).

Position 13-16 (13-16 (KLSG)) interacts with ATP. Gly55 lines the UMP pocket. Residues Gly56 and Arg60 each coordinate ATP. UMP is bound by residues Asp75 and 136–143 (TGNPFFTT). Thr163, Tyr169, and Asp172 together coordinate ATP.

It belongs to the UMP kinase family. Homohexamer.

It localises to the cytoplasm. The enzyme catalyses UMP + ATP = UDP + ADP. Its pathway is pyrimidine metabolism; CTP biosynthesis via de novo pathway; UDP from UMP (UMPK route): step 1/1. Its activity is regulated as follows. Inhibited by UTP. Catalyzes the reversible phosphorylation of UMP to UDP. The chain is Uridylate kinase from Zymomonas mobilis subsp. mobilis (strain ATCC 31821 / ZM4 / CP4).